The primary structure comprises 670 residues: Tripeptidyl-peptidase SED1 (670 aa).

An N-terminal signal peptide occupies residues 1 to 20 (MSTMIFMYFIYIVLYASGIA). Residues 21–231 (ANLSYHVHEK…VGLLKNKILS (211 aa)) constitute a propeptide, removed in mature form. The region spanning 241–669 (LITPDCLRAL…DRMLDLFLQL (429 aa)) is the Peptidase S53 domain. Residues E318 and D322 each act as charge relay system in the active site. 5 N-linked (GlcNAc...) asparagine glycosylation sites follow: N334, N387, N488, N508, and N551. S586 functions as the Charge relay system in the catalytic mechanism. Residues D627, V628, G647, and D649 each coordinate Ca(2+).

It depends on Ca(2+) as a cofactor.

It localises to the secreted. The protein localises to the extracellular space. It catalyses the reaction Release of an N-terminal tripeptide from a polypeptide.. Functionally, secreted tripeptidyl-peptidase which degrades proteins at acidic pHs and is involved in virulence. The sequence is that of Tripeptidyl-peptidase SED1 (SED1) from Arthroderma otae (strain ATCC MYA-4605 / CBS 113480) (Microsporum canis).